We begin with the raw amino-acid sequence, 182 residues long: MILSDQNFLQTQWKEPQTAQSKNTESKCEFHGNSNEVKPIGSLNGQSIAQCRIHTGKTVPIVKGGEQARMEENEIYAIETFGSTGKGYFHDDMETSHYMKNFELADEKIPLRLQKSKGLLKLIDKNFATLAFCRCWIDRLEETKYLMALKDRWMAMVGACILQSFAGKIIGKRANLLLNLII.

The segment covering 1–23 has biased composition (polar residues); sequence MILSDQNFLQTQWKEPQTAQSKN. The interval 1 to 33 is disordered; sequence MILSDQNFLQTQWKEPQTAQSKNTESKCEFHGN.

This sequence belongs to the peptidase M24 family.

This is an uncharacterized protein from Caenorhabditis elegans.